A 1497-amino-acid polypeptide reads, in one-letter code: Dual oxidase 1 (1497 aa).

The first 21 residues, 1–21 (MRSKHVLYIAILFSSIFGGKG), serve as a signal peptide directing secretion. Over 22–587 (IQQNEEFQRY…MQSTYWTDND (566 aa)) the chain is Extracellular. Residues 26–590 (EEFQRYDGWY…TYWTDNDTTY (565 aa)) are peroxidase-like; mediates peroxidase activity. N-linked (GlcNAc...) asparagine glycosylation is found at Asn66, Asn305, Asn567, and Asn586. The helical transmembrane segment at 588–608 (TTYVFTLIGLACVPLICYGIG) threads the bilayer. Topologically, residues 609–986 (RYLVNRRIAI…VSAFLETYRQ (378 aa)) are cytoplasmic. 2 EF-hand domains span residues 817–852 (ANNE…FVNA) and 853–888 (PQKQ…LNQT). The helical transmembrane segment at 987–1007 (HVFIVFCFVAINLVLFFERFW) threads the bilayer. Residues 1008 to 1024 (HYRYMAENRDLRRVMGA) are Extracellular-facing. The helical transmembrane segment at 1025–1045 (GIAITRGAAGALSFCMALILL) threads the bilayer. In terms of domain architecture, Ferric oxidoreductase spans 1030 to 1210 (RGAAGALSFC…FVIDRIIGLM (181 aa)). The Cytoplasmic segment spans residues 1046 to 1068 (TVCRNIITLLRETVIAQYIPFDS). A helical membrane pass occupies residues 1069–1089 (AIAFHKIVALFAAFWATLHTV). Over 1090 to 1134 (GHCVNFYHVGTQSQEGLACLFQEAFFGSNFLPSISYWFFSTITGL) the chain is Extracellular. Residues 1135-1155 (TGIALVAVMCIIYVFALPCFI) form a helical membrane-spanning segment. The Cytoplasmic segment spans residues 1156 to 1163 (KRAYHAFR). The chain crosses the membrane as a helical span at residues 1164–1184 (LTHLLNIAFYALTLLHGLPKL). The Extracellular segment spans residues 1185-1189 (LDSPK). Residues 1190-1210 (FGYYVVGPIVLFVIDRIIGLM) traverse the membrane as a helical segment. An FAD-binding FR-type domain is found at 1211–1318 (QYYKKLEIVN…KGPYGDGNQE (108 aa)). Topologically, residues 1211 to 1497 (QYYKKLEIVN…PSFAHRFETF (287 aa)) are cytoplasmic.

In the N-terminal section; belongs to the peroxidase family. Interacts with doxa-1 and tsp-15. Interacts with rho-1. In terms of tissue distribution, expressed in hypodermal cells.

The protein resides in the membrane. It carries out the reaction NADH + O2 + H(+) = H2O2 + NAD(+). It catalyses the reaction NADPH + O2 + H(+) = H2O2 + NADP(+). With respect to regulation, peroxidase activity is inhibited by aminobenzohydrazide. Its function is as follows. Plays a role in cuticle biogenesis. In complex with doxa-1 and tsp-15, produces reactive oxygen species (ROS), which are probably used by mlt-7 for tyrosine cross-linking, thus stabilizing cuticular extracellular matrix. May regulate the production of ROS by playing a role in modulating proline catabolism. Required in combination with mlt-7 for correct formation of cross-links in cuticle collagens. Association with the GTPase rho-1 promotes ROS production and this interaction may be modulated by memo-1, in order to control the oxidative stress response and longevity. This is Dual oxidase 1 from Caenorhabditis elegans.